Consider the following 148-residue polypeptide: UPF0178 protein BH16190 (148 aa).

It belongs to the UPF0178 family.

The sequence is that of UPF0178 protein BH16190 from Bartonella henselae (strain ATCC 49882 / DSM 28221 / CCUG 30454 / Houston 1) (Rochalimaea henselae).